A 163-amino-acid polypeptide reads, in one-letter code: Lipoprotein signal peptidase (163 aa).

Transmembrane regions (helical) follow at residues 11–31, 64–84, and 88–108; these read ILIA…IATT, MTFF…FFIN, and YNLF…GNFI. Active-site residues include D118 and D136. The chain crosses the membrane as a helical span at residues 131–151; the sequence is IFNIADSSLTIGVILIIIALL.

It belongs to the peptidase A8 family.

Its subcellular location is the cell membrane. It catalyses the reaction Release of signal peptides from bacterial membrane prolipoproteins. Hydrolyzes -Xaa-Yaa-Zaa-|-(S,diacylglyceryl)Cys-, in which Xaa is hydrophobic (preferably Leu), and Yaa (Ala or Ser) and Zaa (Gly or Ala) have small, neutral side chains.. It functions in the pathway protein modification; lipoprotein biosynthesis (signal peptide cleavage). This protein specifically catalyzes the removal of signal peptides from prolipoproteins. The sequence is that of Lipoprotein signal peptidase from Staphylococcus aureus (strain bovine RF122 / ET3-1).